The sequence spans 57 residues: MNIENLKTKAEADISEYITKKIIELKKKTGKEVTSIQFTAREKMTGLESYDVKINLI.

It belongs to the gns family.

Overexpression increases levels of unsaturated fatty acids and suppresses both the temperature-sensitive fabA6 mutation and cold-sensitive secG null mutation. The chain is Protein GnsB (gnsB) from Escherichia coli (strain K12).